The sequence spans 165 residues: Protein SprT (165 aa).

One can recognise a SprT-like domain in the interval 20 to 163; the sequence is EKLAQANLKL…RCVHCGEQLV (144 aa). H78 contributes to the Zn(2+) binding site. E79 is an active-site residue. Position 82 (H82) interacts with Zn(2+).

Belongs to the SprT family. The cofactor is Zn(2+).

The protein resides in the cytoplasm. In Escherichia coli (strain K12 / MC4100 / BW2952), this protein is Protein SprT.